The following is a 417-amino-acid chain: Mitochondrial tRNA-specific 2-thiouridylase 1 (417 aa).

ATP is bound by residues 10 to 17 and Met36; that span reads ALSGGVDS. The segment at 96–98 is interaction with target base in tRNA; the sequence is NPD. Cys101 (nucleophile) is an active-site residue. Cysteines 101 and 222 form a disulfide. Gly126 is an ATP binding site. The interval 171-173 is interaction with tRNA; it reads KDQ. Cys222 functions as the Cysteine persulfide intermediate in the catalytic mechanism. The segment at 334–335 is interaction with tRNA; that stretch reads RH. Positions 397 to 417 are disordered; the sequence is KNRTRVAPEASSDSPGLHPTS. The segment covering 407 to 417 has biased composition (polar residues); that stretch reads SSDSPGLHPTS.

It belongs to the MnmA/TRMU family. As to expression, widely expressed but most abundant in tissues with high metabolic rate including heart, liver and brain. Expression is low in spleen, testis, lung and skeletal muscle. Also expressed in inner ear.

It localises to the mitochondrion. It catalyses the reaction 5-taurinomethyluridine(34) in tRNA + S-sulfanyl-L-cysteinyl-[protein] + AH2 + ATP = 5-taurinomethyl-2-thiouridine(34) in tRNA + L-cysteinyl-[protein] + A + AMP + diphosphate + H(+). Catalyzes the 2-thiolation of uridine at the wobble position (U34) of mitochondrial tRNA(Lys), tRNA(Glu) and tRNA(Gln). Required for the formation of 5-taurinomethyl-2-thiouridine (tm5s2U) of mitochondrial tRNA(Lys), tRNA(Glu), and tRNA(Gln) at the wobble position. ATP is required to activate the C2 atom of the wobble base. The sequence is that of Mitochondrial tRNA-specific 2-thiouridylase 1 (Trmu) from Mus musculus (Mouse).